The primary structure comprises 272 residues: Shikimate dehydrogenase (NADP(+)) (272 aa).

Shikimate contacts are provided by residues 20-22 (TMS) and Thr67. Lys71 acts as the Proton acceptor in catalysis. Glu83 contacts NADP(+). Positions 92 and 107 each coordinate shikimate. Residues 129–133 (GAGGA), 153–158 (NRTKSK), and Leu216 contribute to the NADP(+) site. Tyr218 is a binding site for shikimate. Gly239 serves as a coordination point for NADP(+).

The protein belongs to the shikimate dehydrogenase family. Homodimer.

It catalyses the reaction shikimate + NADP(+) = 3-dehydroshikimate + NADPH + H(+). Its pathway is metabolic intermediate biosynthesis; chorismate biosynthesis; chorismate from D-erythrose 4-phosphate and phosphoenolpyruvate: step 4/7. Functionally, involved in the biosynthesis of the chorismate, which leads to the biosynthesis of aromatic amino acids. Catalyzes the reversible NADPH linked reduction of 3-dehydroshikimate (DHSA) to yield shikimate (SA). This Maridesulfovibrio salexigens (strain ATCC 14822 / DSM 2638 / NCIMB 8403 / VKM B-1763) (Desulfovibrio salexigens) protein is Shikimate dehydrogenase (NADP(+)).